The following is an 891-amino-acid chain: Aconitate hydratase A (891 aa).

[4Fe-4S] cluster-binding residues include cysteine 435, cysteine 501, and cysteine 504.

This sequence belongs to the aconitase/IPM isomerase family. Monomer. It depends on [4Fe-4S] cluster as a cofactor.

The enzyme catalyses citrate = D-threo-isocitrate. It functions in the pathway carbohydrate metabolism; tricarboxylic acid cycle; isocitrate from oxaloacetate: step 2/2. Its function is as follows. Catalyzes the reversible isomerization of citrate to isocitrate via cis-aconitate. The apo form of AcnA functions as a RNA-binding regulatory protein which plays a role as a maintenance or survival enzyme during nutritional or oxidative stress. During oxidative stress inactive AcnA apo-enzyme without iron sulfur clusters binds the acnA mRNA 3' UTRs (untranslated regions), stabilizes acnA mRNA and increases AcnA synthesis, thus mediating a post-transcriptional positive autoregulatory switch. AcnA also enhances the stability of the sodA transcript. This is Aconitate hydratase A from Escherichia coli (strain K12).